The chain runs to 453 residues: Aldehyde dehydrogenase, dimeric NADP-preferring (453 aa).

N-acetylserine is present on Ser-2. The residue at position 178 (Lys-178) is an N6-acetyllysine. An NAD(+)-binding site is contributed by 188–193 (GSTAVG). An N6-acetyllysine modification is found at Lys-194. Catalysis depends on residues Glu-210 and Cys-244.

It belongs to the aldehyde dehydrogenase family. As to quaternary structure, homodimer.

It localises to the cytoplasm. The catalysed reaction is an aldehyde + NAD(+) + H2O = a carboxylate + NADH + 2 H(+). It carries out the reaction octanal + NAD(+) + H2O = octanoate + NADH + 2 H(+). Its function is as follows. ALDHs play a major role in the detoxification of alcohol-derived acetaldehyde. They are involved in the metabolism of corticosteroids, biogenic amines, neurotransmitters, and lipid peroxidation. Oxidizes medium and long chain aldehydes into non-toxic fatty acids. Preferentially oxidizes aromatic aldehyde substrates. Comprises about 50 percent of corneal epithelial soluble proteins. May play a role in preventing corneal damage caused by ultraviolet light. The sequence is that of Aldehyde dehydrogenase, dimeric NADP-preferring (Aldh3a1) from Rattus norvegicus (Rat).